The chain runs to 566 residues: Putative ankyrin repeat protein RF_0987 (566 aa).

Disordered regions lie at residues K61 to S118, P276 to I314, and V355 to T392. Residues N78 to A92 are compositionally biased toward basic and acidic residues. Residues T101–S112 are compositionally biased toward polar residues. Low complexity predominate over residues T296–T308. Polar residues predominate over residues E365 to Q378. 2 ANK repeats span residues S506–T535 and E539–Q566.

This Rickettsia felis (strain ATCC VR-1525 / URRWXCal2) (Rickettsia azadi) protein is Putative ankyrin repeat protein RF_0987.